We begin with the raw amino-acid sequence, 266 residues long: Urease accessory protein UreD (266 aa).

This sequence belongs to the UreD family. In terms of assembly, ureD, UreF and UreG form a complex that acts as a GTP-hydrolysis-dependent molecular chaperone, activating the urease apoprotein by helping to assemble the nickel containing metallocenter of UreC. The UreE protein probably delivers the nickel.

It is found in the cytoplasm. Functionally, required for maturation of urease via the functional incorporation of the urease nickel metallocenter. In Jannaschia sp. (strain CCS1), this protein is Urease accessory protein UreD.